Reading from the N-terminus, the 1383-residue chain is Palladin (1383 aa).

Disordered stretches follow at residues 1–22 (MSGT…EESK), 52–169 (DSET…SQLC), and 183–238 (FKAA…KSPG). Residues 78-96 (HPSHKETKLGEHASRRPQD) show a composition bias toward basic and acidic residues. Polar residues predominate over residues 191 to 201 (RSPNGESSSPD). Serine 192 is modified (phosphoserine). Residues 210–223 (QPSALLSASASQSP) are compositionally biased toward low complexity. One can recognise an Ig-like C2-type 1 domain in the interval 271–360 (PRFIQKLRSQ…GSDTTSAEVF (90 aa)). A disulfide bridge connects residues cysteine 292 and cysteine 344. Phosphoserine is present on serine 401. The region spanning 440 to 539 (PPVFTKELQN…ATSTAQLVVT (100 aa)) is the Ig-like C2-type 2 domain. A disulfide bridge connects residues cysteine 462 and cysteine 521. Residues 562–566 (FPPPP) are interaction with VASP. Disordered stretches follow at residues 609–653 (ETNG…LAKP), 673–728 (AGAR…SSGS), and 740–846 (AQNL…RFGH). Serine 632 is subject to Phosphoserine. At threonine 635 the chain carries Phosphothreonine. A Phosphoserine modification is found at serine 641. Positions 646 to 676 (PPPLLAKPKLDPLKLQQLQNQIRLEQEAGAR) are interaction with LASP1. The segment at 676-696 (RQPPPAPRSAPPSPPFPPPPA) is interaction with SORBS2, SPIN90 and SRC. The span at 677-697 (QPPPAPRSAPPSPPFPPPPAF) shows a compositional bias: pro residues. A phosphoserine mark is found at serine 684, serine 688, and serine 728. The span at 745-763 (PASGHGTPASSPSSSSLPS) shows a compositional bias: low complexity. The interval 766–831 (SPTPRQFGRA…PPPPPPLPSP (66 aa)) is interaction with EPS8. Positions 796–831 (SPSPPPPPPPVFSPTAAFPVPDVFPLPPPPPPLPSP) are interaction with SORBS2, SPIN90, SRC and PFN1. 2 stretches are compositionally biased toward pro residues: residues 797-807 (PSPPPPPPPVF) and 817-830 (DVFP…PLPS). Residues 819–823 (FPLPP) are interaction with VASP. The span at 832–846 (GQASHCSSPATRFGH) shows a compositional bias: polar residues. Residues 833–890 (QASHCSSPATRFGHSQTPAAFLSALLPSQPPPAAVNALGLPKGVTPAGFPKKASRTAR) are interaction with ACTN. Residues serine 893, serine 979, and serine 984 each carry the phosphoserine modification. One can recognise an Ig-like C2-type 3 domain in the interval 1001–1085 (PFFEMKLKHY…MAANPQGRIS (85 aa)). The tract at residues 1096-1125 (NQRGRSPRSPSGHPHVRRPRSRSRDSGDEN) is disordered. Residues 1098-1108 (RGRSPRSPSGH) are compositionally biased toward low complexity. 4 positions are modified to phosphoserine: serine 1101, serine 1104, serine 1106, and serine 1116. The residue at position 1118 (serine 1118) is a Phosphoserine; by PKB/AKT1. Serine 1121 is modified (phosphoserine). Ig-like C2-type domains lie at 1135 to 1226 (PHFL…LVVA) and 1233 to 1324 (PPVF…ARLD). Interaction with EZR stretches follow at residues 1137–1226 (FLQA…LVVA) and 1236–1326 (FIEK…LDVY). Residues cysteine 1156 and cysteine 1208 are joined by a disulfide bond. At serine 1352 the chain carries Phosphoserine.

It belongs to the myotilin/palladin family. Interacts with EPS8. Interacts with LASP1. Interacts with VASP. Interacts with ACTN. Interacts with SORBS2. Interacts with PFN1. Interacts with LPP. Interacts with SPIN90. Interacts with SRC. Interacts with EZR. Interacts with RAI14. Post-translationally, phosphorylated predominantly on serines and, to a lesser extent, on tyrosines. Phosphorylation at Ser-1118 by PKB/AKT1 modulates cytoskeletal organization and cell motility. As to expression, detected in both muscle and non-muscle tissues. High expression in prostate, ovary, colon, and kidney. Not detected in spleen, skeletal muscle, lung and peripheral blood lymphocytes (at protein level). Protein is overexpressed in FA6, HPAF, IMIM-PC2, SUIT-2 and PancTu-II sporadic pancreatic cancer cell lines.

It is found in the cytoplasm. The protein localises to the cytoskeleton. The protein resides in the cell junction. Its subcellular location is the focal adhesion. It localises to the myofibril. It is found in the sarcomere. The protein localises to the z line. The protein resides in the cell projection. Its subcellular location is the ruffle. It localises to the podosome. It is found in the lamellipodium. The protein localises to the axon. The protein resides in the growth cone. In terms of biological role, cytoskeletal protein required for organization of normal actin cytoskeleton. Roles in establishing cell morphology, motility, cell adhesion and cell-extracellular matrix interactions in a variety of cell types. May function as a scaffolding molecule with the potential to influence both actin polymerization and the assembly of existing actin filaments into higher-order arrays. Binds to proteins that bind to either monomeric or filamentous actin. Localizes at sites where active actin remodeling takes place, such as lamellipodia and membrane ruffles. Different isoforms may have functional differences. Involved in the control of morphological and cytoskeletal changes associated with dendritic cell maturation. Involved in targeting ACTN to specific subcellular foci. The protein is Palladin (PALLD) of Homo sapiens (Human).